We begin with the raw amino-acid sequence, 107 residues long: V-type proton ATPase subunit G (107 aa).

This sequence belongs to the V-ATPase G subunit family. As to quaternary structure, V-ATPase is a heteromultimeric enzyme composed of a peripheral catalytic V1 complex (components A to H) attached to an integral membrane V0 proton pore complex (components: a, c, c', c'' and d).

Functionally, catalytic subunit of the peripheral V1 complex of vacuolar ATPase (V-ATPase). V-ATPase is responsible for acidifying a variety of intracellular compartments in eukaryotic cells. The sequence is that of V-type proton ATPase subunit G (atp6v1g) from Dictyostelium discoideum (Social amoeba).